We begin with the raw amino-acid sequence, 442 residues long: DMATS-type prenyltransferase mfmD (442 aa).

The protein belongs to the tryptophan dimethylallyltransferase family.

The protein operates within secondary metabolite biosynthesis; terpenoid biosynthesis. Functionally, prenyltransferase; part of the gene cluster that mediates the biosynthesis of the phthalide-terpenoid hybrid 11'-O-desmethylfendlerol. Within the pathway, mfmD is responsible for farnesylation of the cyclopolic acid intermediate via an O-prenylation reaction. The biosynthesis of 11'-O-desmethylfendlerol begins with the NR-PKS mfmB that forms 3,5-dimethylorsellinic acid (DMOA), which is then transformed into the phthalide 5,7-dihydroxy-4-(hydroxymethyl)-6-methylphthalide by the cytochrome P450 monooxygenase mfmA and the hydrolase mfmC. Subsequently, the methyltransferase mfmE catalyzes 7-O-methylation to yield 5-hydroxy-4-(hydroxymethyl)-7-methoxy-6-methylphthalide, which undergoes C-3 hydroxylation by the cytochrome P450 monooxygenase mfmF. The resultant cyclopolic acid (2,5-dihydroxy-4-(hydroxymethyl)-7-methoxy-6-methylphthalide) is then farnesylated by the DMATS-type prenyltransferase mfmD to afford 5-O-farnesylcyclopolic acid. Finally, the Pyr4-family terpene cyclase mfmH cyclizes the farnesyl moiety of 5-O-farnesylcyclopolic acid into a drimane-like structure, thus completing the biosynthesis of 11'-O-desmethylfendlerol. This Annulohypoxylon moriforme (Filamentous fungus) protein is DMATS-type prenyltransferase mfmD.